Consider the following 385-residue polypeptide: Muconate cycloisomerase 1-2 (385 aa).

Lys171 is an active-site residue. Mn(2+)-binding residues include Glu226 and Asp251.

It belongs to the mandelate racemase/muconate lactonizing enzyme family. In terms of assembly, homooctamer. Mn(2+) serves as cofactor.

It carries out the reaction (S)-muconolactone = cis,cis-muconate + H(+). The protein operates within aromatic compound metabolism; beta-ketoadipate pathway; 5-oxo-4,5-dihydro-2-furylacetate from catechol: step 2/3. Its function is as follows. Catalyzes a syn cycloisomerization. In Acinetobacter lwoffii, this protein is Muconate cycloisomerase 1-2 (catB2).